Here is a 359-residue protein sequence, read N- to C-terminus: 3-dehydroquinate synthase (359 aa).

Residues 71–76 (DGEQYK), 104–108 (GVVGD), 128–129 (TT), lysine 141, lysine 150, and 168–171 (TLNT) contribute to the NAD(+) site. Positions 183, 247, and 264 each coordinate Zn(2+).

Belongs to the sugar phosphate cyclases superfamily. Dehydroquinate synthase family. The cofactor is Co(2+). Zn(2+) serves as cofactor. It depends on NAD(+) as a cofactor.

It localises to the cytoplasm. The enzyme catalyses 7-phospho-2-dehydro-3-deoxy-D-arabino-heptonate = 3-dehydroquinate + phosphate. It functions in the pathway metabolic intermediate biosynthesis; chorismate biosynthesis; chorismate from D-erythrose 4-phosphate and phosphoenolpyruvate: step 2/7. Catalyzes the conversion of 3-deoxy-D-arabino-heptulosonate 7-phosphate (DAHP) to dehydroquinate (DHQ). This chain is 3-dehydroquinate synthase, found in Coxiella burnetii (strain Dugway 5J108-111).